Consider the following 799-residue polypeptide: Lon protease (799 aa).

The 194-residue stretch at 7 to 200 folds into the Lon N-terminal domain; that stretch reads LPVLPLRDIV…KVFALMEGEI (194 aa). 352–359 is an ATP binding site; the sequence is GPPGVGKT. In terms of domain architecture, Lon proteolytic spans 587 to 768; it reads VDQVGIVTGL…DEVLKHALTG (182 aa). Residues serine 674 and lysine 717 contribute to the active site. The segment at 772 to 799 is disordered; it reads PVEWNEAEEPITTSAKKDDGDSDAMLTH.

The protein belongs to the peptidase S16 family. As to quaternary structure, homohexamer. Organized in a ring with a central cavity.

Its subcellular location is the cytoplasm. It carries out the reaction Hydrolysis of proteins in presence of ATP.. Its function is as follows. ATP-dependent serine protease that mediates the selective degradation of mutant and abnormal proteins as well as certain short-lived regulatory proteins. Required for cellular homeostasis and for survival from DNA damage and developmental changes induced by stress. Degrades polypeptides processively to yield small peptide fragments that are 5 to 10 amino acids long. Binds to DNA in a double-stranded, site-specific manner. CcrM is an important target of the Lon protease pathway in C.crescentus. In Caulobacter vibrioides (strain ATCC 19089 / CIP 103742 / CB 15) (Caulobacter crescentus), this protein is Lon protease.